The following is a 218-amino-acid chain: Serine/threonine-protein phosphatase 2 (218 aa).

Mn(2+) contacts are provided by aspartate 22, histidine 24, aspartate 51, and asparagine 77. Histidine 78 acts as the Proton donor in catalysis. Histidine 187 is a Mn(2+) binding site.

Belongs to the PPP phosphatase family. PP-1 subfamily. The cofactor is Mn(2+).

The enzyme catalyses O-phospho-L-seryl-[protein] + H2O = L-seryl-[protein] + phosphate. It catalyses the reaction O-phospho-L-threonyl-[protein] + H2O = L-threonyl-[protein] + phosphate. With respect to regulation, inhibited by cadmium, copper, zinc when added activity but with less efficiency. Can hydrolyze phosphorylated Ser-, Thr- or Tyr-substrates in vitro. The natural substrate is unknown. The chain is Serine/threonine-protein phosphatase 2 (pphB) from Salmonella typhimurium (strain LT2 / SGSC1412 / ATCC 700720).